Reading from the N-terminus, the 285-residue chain is Tumor necrosis factor ligand superfamily member 13B (285 aa).

At 1 to 46 (MDDSTEREQSRLTSCLKKREEMKLKECVSILPRKESPSVRSSKDGK) the chain is on the cytoplasmic side. The helical; Signal-anchor for type II membrane protein transmembrane segment at 47-67 (LLAATLLLALLSCCLTVVSFY) threads the bilayer. Topologically, residues 68–285 (QVAALQGDLA…VTFFGALKLL (218 aa)) are extracellular. The tract at residues 114 to 138 (IFEPPAPGEGNSSQNSRNKRAVQGP) is disordered. An N-linked (GlcNAc...) asparagine glycan is attached at asparagine 124. Residues 145-284 (DCLQLIADSE…DVTFFGALKL (140 aa)) form the THD domain. A disulfide bridge connects residues cysteine 232 and cysteine 245. Asparagine 242 is a glycosylation site (N-linked (GlcNAc...) (high mannose) asparagine).

The protein belongs to the tumor necrosis factor family. As to quaternary structure, homotrimer. Isoform 2 heteromultimerizes with isoform 1, probably limiting the amount of functional isoform 1 on the cell surface. Isoform 3 is unlikely form trimers or bind to BAFF receptors. In terms of processing, the soluble form derives from the membrane form by proteolytic processing. Post-translationally, isoform 2 is not efficiently shed from the membrane unlike isoform 1. N-glycosylated. As to expression, abundantly expressed in peripheral blood Leukocytes and is specifically expressed in monocytes and macrophages. Also found in the spleen, lymph node, bone marrow, T-cells and dendritic cells. A lower expression seen in placenta, heart, lung, fetal liver, thymus, and pancreas. Isoform 2 is expressed in many myeloid cell lines.

The protein resides in the cell membrane. It is found in the secreted. Functionally, cytokine that binds to TNFRSF13B/TACI and TNFRSF17/BCMA. TNFSF13/APRIL binds to the same 2 receptors. Together, they form a 2 ligands -2 receptors pathway involved in the stimulation of B- and T-cell function and the regulation of humoral immunity. A third B-cell specific BAFF-receptor (BAFFR/BR3) promotes the survival of mature B-cells and the B-cell response. In terms of biological role, isoform 2 seems to inhibit isoform 1 secretion and bioactivity. Its function is as follows. Acts as a transcription factor for its own parent gene, in association with NF-kappa-B p50 subunit, at least in autoimmune and proliferative B-cell diseases. The presence of Delta4BAFF is essential for soluble BAFF release by IFNG/IFN-gamma-stimulated monocytes and for B-cell survival. It can directly or indirectly regulate the differential expression of a large number of genes involved in the innate immune response and the regulation of apoptosis. This is Tumor necrosis factor ligand superfamily member 13B (TNFSF13B) from Homo sapiens (Human).